The chain runs to 534 residues: BEN domain-containing protein 4 (534 aa).

3 disordered regions span residues 1-24 (MEEE…RSPY), 48-128 (ELPH…AASS), and 287-322 (VHTL…EEGY). The segment covering 53-63 (RAPPPPPPPFA) has biased composition (pro residues). Polar residues predominate over residues 69–83 (SISSSEPPPQQFQAQ). The segment covering 91–109 (GRAAAAASSSSPSCTPATS) has biased composition (low complexity). Positions 295–310 (SPATSESHGHPSSSTL) are enriched in polar residues. Over residues 311-321 (PEEEEEEDEEG) the composition is skewed to acidic residues. Residues 324-351 (PRCQELEQEVISLQQENEELRRKLESIP) are a coiled coil. One can recognise a BEN domain in the interval 390 to 498 (NYPVYITSKQ…DAVGHARQGR (109 aa)).

This Homo sapiens (Human) protein is BEN domain-containing protein 4 (BEND4).